Here is a 386-residue protein sequence, read N- to C-terminus: Alkanesulfonate monooxygenase (386 aa).

The protein belongs to the SsuD family.

The enzyme catalyses an alkanesulfonate + FMNH2 + O2 = an aldehyde + FMN + sulfite + H2O + 2 H(+). In terms of biological role, catalyzes the desulfonation of aliphatic sulfonates. The polypeptide is Alkanesulfonate monooxygenase (Paraburkholderia phytofirmans (strain DSM 17436 / LMG 22146 / PsJN) (Burkholderia phytofirmans)).